The chain runs to 227 residues: 2,3-bisphosphoglycerate-dependent phosphoglycerate mutase (227 aa).

Substrate-binding positions include 8-15, 21-22, R58, 110-113, K121, 137-138, and 181-182; these read RHGKSVWN, TG, ERMY, RR, and GN. The active-site Tele-phosphohistidine intermediate is H9. E110 acts as the Proton donor/acceptor in catalysis.

The protein belongs to the phosphoglycerate mutase family. BPG-dependent PGAM subfamily.

The catalysed reaction is (2R)-2-phosphoglycerate = (2R)-3-phosphoglycerate. It participates in carbohydrate degradation; glycolysis; pyruvate from D-glyceraldehyde 3-phosphate: step 3/5. In terms of biological role, catalyzes the interconversion of 2-phosphoglycerate and 3-phosphoglycerate. The sequence is that of 2,3-bisphosphoglycerate-dependent phosphoglycerate mutase from Chlamydia felis (strain Fe/C-56) (Chlamydophila felis).